The primary structure comprises 439 residues: Secreted aspartic protease LUC8 (439 aa).

A signal peptide spans 1–20; sequence MMHAFHHLAVLLIGSLPASA. Residues asparagine 33 and asparagine 54 are each glycosylated (N-linked (GlcNAc...) asparagine). Positions 51–435 constitute a Peptidase A1 domain; sequence YLFNITVGTP…DFETQSFGLA (385 aa). Residue aspartate 69 is part of the active site. Residues asparagine 110, asparagine 126, asparagine 179, and asparagine 289 are each glycosylated (N-linked (GlcNAc...) asparagine). Aspartate 300 is an active-site residue. N-linked (GlcNAc...) asparagine glycosylation is found at asparagine 329 and asparagine 373. The cysteines at positions 355 and 391 are disulfide-linked.

It belongs to the peptidase A1 family.

It is found in the secreted. Secreted aspartic protease; part of the gene cluster that mediates the biosynthesis of the mycotoxin lucilactaene and the lucilactaene-related compound NG-391 that act as cell cycle inhibitors with potent growth inhibitory activity against malarial parasites, moderate growth inhibitory activity against cancer cells, and no activity against bacteria and fungi. Within the cluster, LUC7 and LUC8 encode proteins which are not commonly involved in the biosynthesis of secondary metabolites and are not essential for lucilactaene biosynthesis. The sequence is that of Secreted aspartic protease LUC8 from Fusarium sp.